The primary structure comprises 246 residues: Serine protease 1 (246 aa).

Residues 1–15 (MSALLILALVGAAVA) form the signal peptide. A propeptide spans 16 to 23 (FPLEDDDK) (activation peptide). The 221-residue stretch at 24-244 (IVGGYTCPEH…FVGWIQDTIA (221 aa)) folds into the Peptidase S1 domain. 6 disulfide bridges follow: cysteine 30-cysteine 160, cysteine 48-cysteine 64, cysteine 132-cysteine 233, cysteine 139-cysteine 206, cysteine 171-cysteine 185, and cysteine 196-cysteine 220. Histidine 63 serves as the catalytic Charge relay system. 4 residues coordinate Ca(2+): glutamate 75, asparagine 77, valine 80, and glutamate 85. The active-site Charge relay system is aspartate 107. The Charge relay system role is filled by serine 200.

This sequence belongs to the peptidase S1 family. As to quaternary structure, interacts with SERPINA1. Requires Ca(2+) as cofactor.

The protein localises to the secreted. Its subcellular location is the extracellular space. The catalysed reaction is Preferential cleavage: Arg-|-Xaa, Lys-|-Xaa.. The sequence is that of Serine protease 1 from Rattus norvegicus (Rat).